The primary structure comprises 255 residues: ATP synthase subunit b 1 (255 aa).

The helical transmembrane segment at 5 to 22 threads the bilayer; that stretch reads WITVAAQIVNFLLLIWLL.

The protein belongs to the ATPase B chain family. As to quaternary structure, F-type ATPases have 2 components, F(1) - the catalytic core - and F(0) - the membrane proton channel. F(1) has five subunits: alpha(3), beta(3), gamma(1), delta(1), epsilon(1). F(0) has three main subunits: a(1), b(2) and c(10-14). The alpha and beta chains form an alternating ring which encloses part of the gamma chain. F(1) is attached to F(0) by a central stalk formed by the gamma and epsilon chains, while a peripheral stalk is formed by the delta and b chains.

The protein localises to the cell inner membrane. Its function is as follows. F(1)F(0) ATP synthase produces ATP from ADP in the presence of a proton or sodium gradient. F-type ATPases consist of two structural domains, F(1) containing the extramembraneous catalytic core and F(0) containing the membrane proton channel, linked together by a central stalk and a peripheral stalk. During catalysis, ATP synthesis in the catalytic domain of F(1) is coupled via a rotary mechanism of the central stalk subunits to proton translocation. Component of the F(0) channel, it forms part of the peripheral stalk, linking F(1) to F(0). The protein is ATP synthase subunit b 1 of Dinoroseobacter shibae (strain DSM 16493 / NCIMB 14021 / DFL 12).